Reading from the N-terminus, the 849-residue chain is Mechanosensitive ion channel protein 7 (849 aa).

Positions 1-49 (MEFRKPFKSHSSYKQIISTGDQNEKTKKKKKLANLDDGDIAKTQSSGSS) are disordered. Polar residues predominate over residues 9–21 (SHSSYKQIISTGD). The next 6 membrane-spanning stretches (helical) occupy residues 231–251 (AITLLQWMSLIALVVALVLSL), 274–294 (LVLICGRLVSGCGIRIIVFFI), 313–333 (TAVQNCLWLGLVLLAWHFLFD), 344–364 (VLLLMSKILVCFLLSTVLWLI), 606–626 (MISFLTAIVIIVIWLILLEIA), and 642–662 (AFMFGNSLKTVFESIIFLFII).

This sequence belongs to the MscS (TC 1.A.23) family.

It is found in the membrane. In terms of biological role, mechanosensitive channel that opens in response to stretch forces in the membrane lipid bilayer. This Arabidopsis thaliana (Mouse-ear cress) protein is Mechanosensitive ion channel protein 7 (MSL7).